We begin with the raw amino-acid sequence, 557 residues long: MSDIEIAQANEATAMWPITKVAAGLGLSEDDLELYGKAKAKLSFSALNALKDKPFGKLVLVTSINPTPAGEGKSTITVGLGDALQQRGKHPVIALREPSLGPVMGMKGGATGGGYAQVVPMEDINLHFTGDMHALTTAVDTLAALIDNHLQQGNTLNIDPRRILWKRALDINDRALRHVTIGLGGPTSGVPREDGFDITVASELMAVLCLAENIADLKARIGRIVIGYTYDRQPVTVADLKVTGAIAMLLRDALKPNLVQTLEHTPAFIHGGPFANIAHGCNSVLATRTALQLGDIAITEAGFGADLGGEKFMDIKTPVLGKTPDAVVIVATVRALKYNGGVALKDLQTENVEALAQGFDNLKRHIHSMQSYGVPVVVAINRFTSDTDAEIQFLIDACAKLNVKAVTATVWADGGRGGLAVADAVLAALDQPAHFTRLYDPQSDVKTKIKTIVQKIYGGADVDYEGKANSALRTIVKNGWQDLPVCMAKTQYSLTDNAKTLGAPEGFTIHVRDIIPKLGAGFLVVMTGSVLTMPGLPKVPAALNMDVTDDGKISGLF.

67 to 74 (TPAGEGKS) contributes to the ATP binding site.

The protein belongs to the formate--tetrahydrofolate ligase family.

The enzyme catalyses (6S)-5,6,7,8-tetrahydrofolate + formate + ATP = (6R)-10-formyltetrahydrofolate + ADP + phosphate. The protein operates within one-carbon metabolism; tetrahydrofolate interconversion. The protein is Formate--tetrahydrofolate ligase of Lacticaseibacillus paracasei (strain ATCC 334 / BCRC 17002 / CCUG 31169 / CIP 107868 / KCTC 3260 / NRRL B-441) (Lactobacillus paracasei).